A 256-amino-acid polypeptide reads, in one-letter code: Ribonuclease HII (256 aa).

The region spanning 72–256 is the RNase H type-2 domain; sequence ALICGIDEVG…SFEPIKSMMK (185 aa). D78, E79, and D170 together coordinate a divalent metal cation.

The protein belongs to the RNase HII family. Mn(2+) serves as cofactor. Mg(2+) is required as a cofactor.

It is found in the cytoplasm. The catalysed reaction is Endonucleolytic cleavage to 5'-phosphomonoester.. Endonuclease that specifically degrades the RNA of RNA-DNA hybrids. The sequence is that of Ribonuclease HII from Staphylococcus epidermidis (strain ATCC 12228 / FDA PCI 1200).